The sequence spans 226 residues: ATP synthase subunit a (226 aa).

The next 6 membrane-spanning stretches (helical) occupy residues 17 to 37 (FSYFFHIGLVALIAVIVAMMA), 79 to 99 (LVATLGIIVFFSNIIGIIPGF), 105 to 125 (SLNLTLSLAIIVFVYYHFEGI), 134 to 154 (FAHFMGPIKLLAPLMFPIEIV), 176 to 196 (LFLMVILALVPYIAPLPAYVL), and 199 to 219 (FMAFLQAFIFMILTYVYLAGA).

The protein belongs to the ATPase A chain family. In terms of assembly, F-type ATPases have 2 components, CF(1) - the catalytic core - and CF(0) - the membrane proton channel. CF(1) has five subunits: alpha(3), beta(3), gamma(1), delta(1), epsilon(1). CF(0) has three main subunits: a(1), b(2) and c(9-12). The alpha and beta chains form an alternating ring which encloses part of the gamma chain. CF(1) is attached to CF(0) by a central stalk formed by the gamma and epsilon chains, while a peripheral stalk is formed by the delta and b chains.

It is found in the cell inner membrane. Its function is as follows. Key component of the proton channel; it plays a direct role in the translocation of protons across the membrane. This chain is ATP synthase subunit a, found in Campylobacter jejuni subsp. jejuni serotype O:23/36 (strain 81-176).